Here is a 481-residue protein sequence, read N- to C-terminus: UDP-N-acetylmuramate--L-alanine ligase (481 aa).

An ATP-binding site is contributed by 135-141 (GTHGKTT).

The protein belongs to the MurCDEF family.

It localises to the cytoplasm. It catalyses the reaction UDP-N-acetyl-alpha-D-muramate + L-alanine + ATP = UDP-N-acetyl-alpha-D-muramoyl-L-alanine + ADP + phosphate + H(+). Its pathway is cell wall biogenesis; peptidoglycan biosynthesis. Functionally, cell wall formation. The sequence is that of UDP-N-acetylmuramate--L-alanine ligase from Nostoc punctiforme (strain ATCC 29133 / PCC 73102).